Here is a 403-residue protein sequence, read N- to C-terminus: Probable tRNA sulfurtransferase (403 aa).

The THUMP domain occupies 61 to 166 (EAIAESLKDV…SGYSYIMCDE (106 aa)). ATP is bound by residues 184–185 (LL), 209–210 (HF), Arg-266, Gly-288, and Gln-297.

Belongs to the ThiI family.

The protein resides in the cytoplasm. The enzyme catalyses [ThiI sulfur-carrier protein]-S-sulfanyl-L-cysteine + a uridine in tRNA + 2 reduced [2Fe-2S]-[ferredoxin] + ATP + H(+) = [ThiI sulfur-carrier protein]-L-cysteine + a 4-thiouridine in tRNA + 2 oxidized [2Fe-2S]-[ferredoxin] + AMP + diphosphate. It carries out the reaction [ThiS sulfur-carrier protein]-C-terminal Gly-Gly-AMP + S-sulfanyl-L-cysteinyl-[cysteine desulfurase] + AH2 = [ThiS sulfur-carrier protein]-C-terminal-Gly-aminoethanethioate + L-cysteinyl-[cysteine desulfurase] + A + AMP + 2 H(+). The protein operates within cofactor biosynthesis; thiamine diphosphate biosynthesis. Catalyzes the ATP-dependent transfer of a sulfur to tRNA to produce 4-thiouridine in position 8 of tRNAs, which functions as a near-UV photosensor. Also catalyzes the transfer of sulfur to the sulfur carrier protein ThiS, forming ThiS-thiocarboxylate. This is a step in the synthesis of thiazole, in the thiamine biosynthesis pathway. The sulfur is donated as persulfide by IscS. This is Probable tRNA sulfurtransferase from Bacillus cytotoxicus (strain DSM 22905 / CIP 110041 / 391-98 / NVH 391-98).